A 614-amino-acid chain; its full sequence is MSNPDALPFLTEMTVADIISKQAKHGVSFNRRNARWYVHLLKEIIVNIDRELIPLLPKMRLDGSTYMKPFKKSGALQKWPQAYCDRVGLKREDIGGAFTCVEYVDFDPSKDARVKEALMDEGFLPPEFNVSKKPWNTFEIKKDMRKYGTYQAWYTAWMRGNAKQKQTAEMVDADIKKFLEKHFRFKTKNYMKAYVFGLGLNPNRRNPVTFDEIKKALATSNKWPTAPTNLEETLEEGLGGELGSVGSLLKRRVVAAHRLGLISGLIAKEREDGKLSAEANSCATPTFRFKHRIVVNIPSRGLFGHECRSLFESDYNSDSDHSRPFVITNVVPDGCYIRKGTNVIYEKGKPGKKDKPVGAYKYYIPAGKEVFLGYDGSGLELRMLAHYLIKECRDMLAEAIEENNPAKKALAERGLASAIMYRDILLEGDIHSHNQKLAGLPTRDNAKTFIYAFNYGAGDAKLGSIVGGGADEGSVMRARFLAENPCIAILIDRMTEKAAQGYLIGVDGRKITMRRDATGKVMVHKALNTLLQCAGAVVMKYAMMFLNKWIEKDKVRCAKVIDMHDEGQFSVNRNDVQKLKEHTELCVKKAGEYLNMECPLASDCQIGLNWMHTH.

The protein belongs to the DNA polymerase type-A family.

The catalysed reaction is DNA(n) + a 2'-deoxyribonucleoside 5'-triphosphate = DNA(n+1) + diphosphate. Its function is as follows. Replicates viral genomic DNA. This polymerase possesses two enzymatic activities: DNA synthesis (polymerase) and an exonucleolytic activity that degrades single-stranded DNA in the 3'-5' direction. The sequence is that of DNA-directed DNA polymerase from Escherichia coli (Escherichia coli phage phi32).